The chain runs to 337 residues: Methylthioribose-1-phosphate isomerase (337 aa).

Substrate is bound by residues 47–49 (RGA), R81, and Q184. D225 (proton donor) is an active-site residue. 235–236 (NK) contributes to the substrate binding site.

The protein belongs to the eIF-2B alpha/beta/delta subunits family. MtnA subfamily.

It carries out the reaction 5-(methylsulfanyl)-alpha-D-ribose 1-phosphate = 5-(methylsulfanyl)-D-ribulose 1-phosphate. The protein operates within amino-acid biosynthesis; L-methionine biosynthesis via salvage pathway; L-methionine from S-methyl-5-thio-alpha-D-ribose 1-phosphate: step 1/6. Catalyzes the interconversion of methylthioribose-1-phosphate (MTR-1-P) into methylthioribulose-1-phosphate (MTRu-1-P). The sequence is that of Methylthioribose-1-phosphate isomerase from Synechococcus sp. (strain CC9605).